The primary structure comprises 172 residues: Adenine phosphoribosyltransferase (172 aa).

Belongs to the purine/pyrimidine phosphoribosyltransferase family. Homodimer.

The protein localises to the cytoplasm. It carries out the reaction AMP + diphosphate = 5-phospho-alpha-D-ribose 1-diphosphate + adenine. The protein operates within purine metabolism; AMP biosynthesis via salvage pathway; AMP from adenine: step 1/1. Functionally, catalyzes a salvage reaction resulting in the formation of AMP, that is energically less costly than de novo synthesis. The protein is Adenine phosphoribosyltransferase of Clostridium acetobutylicum (strain ATCC 824 / DSM 792 / JCM 1419 / IAM 19013 / LMG 5710 / NBRC 13948 / NRRL B-527 / VKM B-1787 / 2291 / W).